The following is a 158-amino-acid chain: C-type natriuretic peptide 3 (158 aa).

The N-terminal stretch at 1-21 (MSLNLPGYALFFILLVASSGA) is a signal peptide. Residues 22-136 (KPAPDLQILE…SKRSRSRYKK (115 aa)) constitute a propeptide that is removed on maturation. Residues 32–95 (PPLSSLEEQE…EVQERGRGTG (64 aa)) form a disordered region. Positions 47 to 64 (VQEKVQEQQEEVQEKVQE) are enriched in basic and acidic residues. The span at 65–86 (QQEEVQEQQEEVQEQQEEQQEE) shows a compositional bias: acidic residues. C142 and C158 form a disulfide bridge.

The protein belongs to the natriuretic peptide family.

The protein localises to the secreted. Its function is as follows. Exhibits natriuretic and vasodepressant activity. Has cGMP-stimulating activity. May help to regulate body fluid homeostasis in a variety of aquatic environments. This chain is C-type natriuretic peptide 3, found in Takifugu rubripes (Japanese pufferfish).